A 251-amino-acid polypeptide reads, in one-letter code: Fibroblast growth factor 23 (251 aa).

An N-terminal signal peptide occupies residues M1–A24. A disulfide bridge connects residues C95 and C113. T171 and T178 each carry an O-linked (GalNAc) threonine glycan. Positions R175–V251 are disordered. Residues R179 to P189 show a composition bias toward basic and acidic residues. S180 is subject to Phosphoserine; by FAM20C.

It belongs to the heparin-binding growth factors family. In terms of assembly, interacts with FGFR1, FGFR2, FGFR3 and FGFR4. Affinity between fibroblast growth factors (FGFs) and their receptors is increased by KL and heparan sulfate glycosaminoglycans that function as coreceptors. In terms of processing, following secretion this protein is inactivated by cleavage into a N-terminal fragment and a C-terminal fragment. The processing is effected by proprotein convertases. Post-translationally, O-glycosylated at Thr-171 and Thr-178 by GALNT3 and glycosylation of Thr-178 requires previous glycosylation at Thr171. Glycosylation is necessary for secretion; it blocks processing by proprotein convertases when the O-glycan is alpha 2,6-sialylated. Competition between proprotein convertase cleavage and block of cleavage by O-glycosylation determines the level of secreted active FGF23. Phosphorylation at Ser-180 mediated by FAM20C slows down glycosylation at Thr-178 notably. In terms of tissue distribution, expressed in the parathyroid.

It localises to the secreted. In terms of biological role, regulator of phosphate homeostasis. Inhibits renal tubular phosphate transport by reducing SLC34A1 levels. Regulator of vitamin-D metabolism. Negatively regulates osteoblasts differentiation and matrix mineralization. Acts directly on the parathyroid to decrease PTH secretion. Up-regulates EGR1 expression in the presence of KL. This chain is Fibroblast growth factor 23 (Fgf23), found in Rattus norvegicus (Rat).